The following is a 799-amino-acid chain: Protein-lysine N-methyltransferase SMYD4 (799 aa).

Position 112 to 114 (112 to 114) interacts with S-adenosyl-L-methionine; the sequence is RSA. Residues 233–570 enclose the SET domain; that stretch reads LSVSLCTHPL…KGQEILHCYG (338 aa). 8 residues coordinate Zn(2+): Cys296, Cys299, Cys309, Cys312, Cys318, Cys322, His331, and Cys335. An MYND-type zinc finger spans residues 296-335; it reads CHRCLKHTLATVPCGSCSYAKYCSQECMQQAWDLYHSTEC. S-adenosyl-L-methionine is bound by residues 535–536, Tyr569, and Phe591; that span reads NH.

Belongs to the class V-like SAM-binding methyltransferase superfamily. As to quaternary structure, interacts (via MYND-type zinc finger) with HDAC1.

It localises to the nucleus. Its subcellular location is the cytoplasm. It catalyses the reaction L-lysyl-[protein] + S-adenosyl-L-methionine = N(6)-methyl-L-lysyl-[protein] + S-adenosyl-L-homocysteine + H(+). Protein-lysine N-methyltransferase. Monomethylates PRMT5, modulating its transcriptional activity. May also act as a histone methyltransferase. Plays a critical role in cardiac development. Acts as a key epigenetic regulator of gene expression during cardiac development via its dual activities as a methyltransferase and negative regulator of HDAC1. The protein is Protein-lysine N-methyltransferase SMYD4 (Smyd4) of Mus musculus (Mouse).